The sequence spans 83 residues: MSSGGLLLLLGLLTLWEVLTPISSKDRPKFCELPADTGPCKAIFQAFYYHPVHRTCLKFIYGGCEGNANNFKTIDECKRTCAA.

Residues 1–24 (MSSGGLLLLLGLLTLWEVLTPISS) form the signal peptide. Positions 31 to 81 (CELPADTGPCKAIFQAFYYHPVHRTCLKFIYGGCEGNANNFKTIDECKRTC) constitute a BPTI/Kunitz inhibitor domain. 3 disulfides stabilise this stretch: C31/C81, C40/C64, and C56/C77.

Belongs to the venom Kunitz-type family. In terms of tissue distribution, expressed by the venom gland.

The protein localises to the secreted. Its function is as follows. Serine protease inhibitor. This Austrelaps superbus (Lowland copperhead snake) protein is Kunitz-type serine protease inhibitor superbin-2.